We begin with the raw amino-acid sequence, 919 residues long: Lipoxygenase 3, chloroplastic (919 aa).

A chloroplast-targeting transit peptide spans 1–52; that stretch reads MALAKELMGYPLITERSSLVSSASHFKKRTQSTQFSINPFDRRPRKTKSGVV. One can recognise a PLAT domain in the interval 86-222; sequence VRAVVTVRNK…DHPDKRIFFT (137 aa). A Lipoxygenase domain is found at 225–919; sequence PYLPNETPSG…CRGVPNSVSI (695 aa). The tract at residues 272-310 is disordered; that stretch reads PDKSSELSRPKLGGKEVPYPRRCRTGRQSTVSDKDAESR. Fe cation is bound by residues histidine 578, histidine 583, histidine 770, asparagine 774, and isoleucine 919.

This sequence belongs to the lipoxygenase family. Requires Fe cation as cofactor. In terms of tissue distribution, expressed in roots and leaves.

The protein resides in the plastid. It is found in the chloroplast. The enzyme catalyses (9Z,12Z)-octadecadienoate + O2 = (13S)-hydroperoxy-(9Z,11E)-octadecadienoate. It carries out the reaction (9Z,12Z,15Z)-octadecatrienoate + O2 = (13S)-hydroperoxy-(9Z,11E,15Z)-octadecatrienoate. The protein operates within lipid metabolism; oxylipin biosynthesis. In terms of biological role, 13S-lipoxygenase that can use linolenic acid as substrates. Plant lipoxygenases may be involved in a number of diverse aspects of plant physiology including growth and development, pest resistance, and senescence or responses to wounding. Catalyzes the hydroperoxidation of lipids containing a cis,cis-1,4-pentadiene structure. This is Lipoxygenase 3, chloroplastic (LOX3) from Arabidopsis thaliana (Mouse-ear cress).